The primary structure comprises 125 residues: Large ribosomal subunit protein bL12 (125 aa).

Belongs to the bacterial ribosomal protein bL12 family. Homodimer. Part of the ribosomal stalk of the 50S ribosomal subunit. Forms a multimeric L10(L12)X complex, where L10 forms an elongated spine to which 2 to 4 L12 dimers bind in a sequential fashion. Binds GTP-bound translation factors.

Forms part of the ribosomal stalk which helps the ribosome interact with GTP-bound translation factors. Is thus essential for accurate translation. The sequence is that of Large ribosomal subunit protein bL12 from Campylobacter jejuni subsp. jejuni serotype O:2 (strain ATCC 700819 / NCTC 11168).